We begin with the raw amino-acid sequence, 1678 residues long: Nuclear pore complex protein Nup98-Nup96 (1678 aa).

The span at 1-11 (MFGQNKSFGSS) shows a compositional bias: low complexity. 5 disordered regions span residues 1–41 (MFGQ…QPAN), 68–100 (SSIF…FGST), 301–366 (TTGS…GAPA), 441–473 (FGNT…TQAT), and 603–631 (SKEA…RSVH). A compositionally biased stretch (gly residues) spans 12 to 22 (SFGGGSSGSGL). Composition is skewed to low complexity over residues 23 to 38 (FGQN…LFGQ) and 73 to 83 (SPQQPQNNQSS). Positions 306–329 (LFGNQQPQTNTGGSLFGNTQNQNQ) are enriched in polar residues. Residues 345 to 366 (FGQAQQQPQQQSSGFSFGGAPA) show a composition bias toward low complexity. Composition is skewed to polar residues over residues 456-473 (SQPQ…TQAT) and 615-628 (RNST…LTNR). A Peptidase S59 domain is found at 777 to 919 (KPDYFSLPTI…GSWVFRVDHF (143 aa)). Residue serine 920 is the Nucleophile of the active site.

The protein belongs to the nucleoporin GLFG family. Part of the NPC. Post-translationally, the Nup98 and Nup96 chains are autoproteolytically processed from a single precursor protein.

Its subcellular location is the cytoplasmic granule. The protein localises to the nucleus membrane. The protein resides in the nucleus. It is found in the nuclear pore complex. It localises to the nucleus envelope. Its subcellular location is the chromosome. In terms of biological role, nup98 and Nup96 play a role in the bidirectional transport across the nucleoporin complex (NPC). Required for the nuclear import of hcp-4 during mitotic prophase, this step is essential for centrosome assembly and resolution. Regulates nucleoporin npp-5 localization to the nuclear membrane during interphase and to kinetochores during metaphase. Has a role in P granule integrity; may promote the 'liquid phase' of P granules by increasing the number of interacting RNA-protein complexes. Binds nos-2 mRNA, probably indirectly, and promotes its accumulation in P granules. The sequence is that of Nuclear pore complex protein Nup98-Nup96 from Caenorhabditis elegans.